Reading from the N-terminus, the 1274-residue chain is Meiosis inhibitor protein 1 (1274 aa).

In terms of tissue distribution, expressed predominantly in testis. Weakly expressed in spleen and thymus. Expressed in the ovaries, Fallopian tubes and uterus.

Its function is as follows. Required for normal meiotic chromosome synapsis. May be involved in the formation of meiotic double-strand breaks (DSBs) in spermatocytes. The chain is Meiosis inhibitor protein 1 from Homo sapiens (Human).